The sequence spans 115 residues: MIPMKRERMLTIRVTDDEHARLLERCEGKQLAVWMRRVCLGEPVARSGKLPTLAPPLLRQLAAIGNNLNQTARKVNSGQWSSGDRVQVVAALMAIGDELRRLRLAVREQGARDDS.

This sequence to E.coli MbaC and MbkC. As to quaternary structure, homodimer. Interacts with MbeA and MbeB to form the relaxosome.

Its function is as follows. Required for efficient mobilization of ColE1 plasmid and is thus essential to promote the specific transfer of the plasmid during conjugation. Probably functions by inducing DNA bending, helping the MbeA relaxase to melt the DNA around the nic site and cleave the phosphodiester bond. Binds specifically double-stranded DNA (dsDNA) containing the ColE1 oriT but does not recognize the inverted repeat (IR). The protein is Mobilization protein MbeC (mbeC) of Escherichia coli.